The sequence spans 425 residues: Enolase 2 (425 aa).

Glutamine 163 contributes to the (2R)-2-phosphoglycerate binding site. Catalysis depends on glutamate 205, which acts as the Proton donor. Residues aspartate 242, glutamate 285, and aspartate 312 each contribute to the Mg(2+) site. (2R)-2-phosphoglycerate-binding residues include lysine 337, arginine 366, serine 367, and lysine 388. Lysine 337 acts as the Proton acceptor in catalysis.

The protein belongs to the enolase family. It depends on Mg(2+) as a cofactor.

The protein resides in the cytoplasm. Its subcellular location is the secreted. It localises to the cell surface. The catalysed reaction is (2R)-2-phosphoglycerate = phosphoenolpyruvate + H2O. The protein operates within carbohydrate degradation; glycolysis; pyruvate from D-glyceraldehyde 3-phosphate: step 4/5. In terms of biological role, catalyzes the reversible conversion of 2-phosphoglycerate (2-PG) into phosphoenolpyruvate (PEP). It is essential for the degradation of carbohydrates via glycolysis. The chain is Enolase 2 from Cupriavidus metallidurans (strain ATCC 43123 / DSM 2839 / NBRC 102507 / CH34) (Ralstonia metallidurans).